We begin with the raw amino-acid sequence, 166 residues long: Large ribosomal subunit protein mL49 (166 aa).

The disordered stretch occupies residues 56-78 (RIPDPPKHEHYPTPSGWQPPRDP).

Belongs to the mitochondrion-specific ribosomal protein mL49 family. As to quaternary structure, component of the mitochondrial large ribosomal subunit (mt-LSU). Mature mammalian 55S mitochondrial ribosomes consist of a small (28S) and a large (39S) subunit. The 28S small subunit contains a 12S ribosomal RNA (12S mt-rRNA) and 30 different proteins. The 39S large subunit contains a 16S rRNA (16S mt-rRNA), a copy of mitochondrial valine transfer RNA (mt-tRNA(Val)), which plays an integral structural role, and 52 different proteins. Interacts with OXA1L. In terms of tissue distribution, ubiquitous.

The protein resides in the mitochondrion. This Homo sapiens (Human) protein is Large ribosomal subunit protein mL49 (MRPL49).